The primary structure comprises 265 residues: Methyl-coenzyme M reductase II subunit gamma (265 aa).

R123 serves as a coordination point for coenzyme M.

Belongs to the methyl-coenzyme M reductase gamma subunit family. MCR is a hexamer of two alpha, two beta, and two gamma chains, forming a dimer of heterotrimers. It depends on coenzyme F430 as a cofactor.

The enzyme catalyses coenzyme B + methyl-coenzyme M = methane + coenzyme M-coenzyme B heterodisulfide. The protein operates within one-carbon metabolism; methyl-coenzyme M reduction; methane from methyl-coenzyme M: step 1/1. Component of the methyl-coenzyme M reductase (MCR) I that catalyzes the reductive cleavage of methyl-coenzyme M (CoM-S-CH3 or 2-(methylthio)ethanesulfonate) using coenzyme B (CoB or 7-mercaptoheptanoylthreonine phosphate) as reductant which results in the production of methane and the mixed heterodisulfide of CoB and CoM (CoM-S-S-CoB). This is the final step in methanogenesis. The polypeptide is Methyl-coenzyme M reductase II subunit gamma (mrtG) (Methanothermobacter thermautotrophicus (strain ATCC 29096 / DSM 1053 / JCM 10044 / NBRC 100330 / Delta H) (Methanobacterium thermoautotrophicum)).